The following is a 153-amino-acid chain: Large ribosomal subunit protein uL23m (153 aa).

Residues 131 to 153 (MADEQQRQGSDPQRGGVPNWFSL) form a disordered region.

It belongs to the universal ribosomal protein uL23 family. As to quaternary structure, component of the mitochondrial ribosome large subunit (39S) which comprises a 16S rRNA and about 50 distinct proteins.

Its subcellular location is the mitochondrion. This Otolemur garnettii (Small-eared galago) protein is Large ribosomal subunit protein uL23m (MRPL23).